The primary structure comprises 196 residues: ATP-dependent Clp protease proteolytic subunit (196 aa).

The Nucleophile role is filled by S101. Residue H126 is part of the active site.

It belongs to the peptidase S14 family. Component of the chloroplastic Clp protease core complex.

The protein localises to the plastid. Its subcellular location is the chloroplast stroma. It carries out the reaction Hydrolysis of proteins to small peptides in the presence of ATP and magnesium. alpha-casein is the usual test substrate. In the absence of ATP, only oligopeptides shorter than five residues are hydrolyzed (such as succinyl-Leu-Tyr-|-NHMec, and Leu-Tyr-Leu-|-Tyr-Trp, in which cleavage of the -Tyr-|-Leu- and -Tyr-|-Trp bonds also occurs).. In terms of biological role, cleaves peptides in various proteins in a process that requires ATP hydrolysis. Has a chymotrypsin-like activity. Plays a major role in the degradation of misfolded proteins. The protein is ATP-dependent Clp protease proteolytic subunit of Pinus thunbergii (Japanese black pine).